The primary structure comprises 380 residues: Succinyl-diaminopimelate desuccinylase (380 aa).

Residue H70 participates in Zn(2+) binding. D72 is an active-site residue. D104 contributes to the Zn(2+) binding site. The Proton acceptor role is filled by E138. The Zn(2+) site is built by E139, E167, and H353.

It belongs to the peptidase M20A family. DapE subfamily. In terms of assembly, homodimer. Zn(2+) is required as a cofactor. Requires Co(2+) as cofactor.

It carries out the reaction N-succinyl-(2S,6S)-2,6-diaminopimelate + H2O = (2S,6S)-2,6-diaminopimelate + succinate. Its pathway is amino-acid biosynthesis; L-lysine biosynthesis via DAP pathway; LL-2,6-diaminopimelate from (S)-tetrahydrodipicolinate (succinylase route): step 3/3. Its function is as follows. Catalyzes the hydrolysis of N-succinyl-L,L-diaminopimelic acid (SDAP), forming succinate and LL-2,6-diaminopimelate (DAP), an intermediate involved in the bacterial biosynthesis of lysine and meso-diaminopimelic acid, an essential component of bacterial cell walls. The polypeptide is Succinyl-diaminopimelate desuccinylase (Ectopseudomonas mendocina (strain ymp) (Pseudomonas mendocina)).